The following is a 394-amino-acid chain: Ceramide glucosyltransferase (394 aa).

Topologically, residues 1–10 are lumenal; the sequence is MALLDLALEG. A helical transmembrane segment spans residues 11 to 32; the sequence is MAVFGFVLFLVLWLMHFMAIIY. Topologically, residues 33-195 are cytoplasmic; it reads TRLHLNKKAT…QVYFGTSHPR (163 aa). Position 92 (Asp92) is a short sequence motif, D1. Position 117 is an N6-acetyllysine (Lys117). A short sequence motif (D2) is located at residue Asp144. Residues 196–215 form a helical membrane-spanning segment; the sequence is YYISANVTGFKCVTGMSCLM. Residues 216–287 are Lumenal-facing; that stretch reads RKDVLDQAGG…KLRINMLPAT (72 aa). Position 236 (Asp236) is a short sequence motif, D3. The active-site Proton acceptor is Asp236. The (Q/R)XXRW motif lies at 272–276; the sequence is RMIRW. A helical membrane pass occupies residues 288–304; sequence IICEPISECFVASLIIG. Residues 305–309 are Cytoplasmic-facing; sequence WAAHH. Residues 310–328 traverse the membrane as a helical segment; that stretch reads VFRWDIMVFFMCHCLAWFI. Residues 329-348 lie on the Lumenal side of the membrane; the sequence is FDYIQLRGVQGGTLCFSKLD. The helical transmembrane segment at 349 to 369 threads the bilayer; that stretch reads YAVAWFIRESMTIYIFLSALW. At 370 to 394 the chain is on the cytoplasmic side; it reads DPTISWRTGRYRLRCGGTAEEILDV.

It belongs to the glycosyltransferase 2 family. Interacts with RTN1; regulates the ceramide glucosyltransferase activity of UGCG. Found in all tissues examined.

The protein resides in the golgi apparatus membrane. It carries out the reaction an N-acylsphing-4-enine + UDP-alpha-D-glucose = a beta-D-glucosyl-(1&lt;-&gt;1')-N-acylsphing-4-enine + UDP + H(+). The enzyme catalyses UDP-alpha-D-xylose + an N-acylsphing-4-enine = a beta-D-xylosyl-(1&lt;-&gt;1')-N-acylsphing-4-enine + UDP + H(+). The catalysed reaction is N-(9Z-octadecenoyl)-sphing-4-enine + UDP-alpha-D-xylose = beta-D-xylosyl-(1&lt;-&gt;1')-N-(9Z-octadecenoyl)-sphing-4-enine + UDP + H(+). It functions in the pathway lipid metabolism; sphingolipid metabolism. Its function is as follows. Participates in the initial step of the glucosylceramide-based glycosphingolipid/GSL synthetic pathway at the cytosolic surface of the Golgi. Catalyzes the transfer of glucose from UDP-glucose to ceramide to produce glucosylceramide/GlcCer (such as beta-D-glucosyl-(1&lt;-&gt;1')-N-acylsphing-4-enine). GlcCer is the core component of glycosphingolipids/GSLs, amphipathic molecules consisting of a ceramide lipid moiety embedded in the outer leaflet of the membrane, linked to one of hundreds of different externally oriented oligosaccharide structures. Glycosphingolipids are essential components of membrane microdomains that mediate membrane trafficking and signal transduction, implicated in many fundamental cellular processes, including growth, differentiation, migration, morphogenesis, cell-to-cell and cell-to-matrix interactions. They are required for instance in the proper development and functioning of the nervous system. As an example of their role in signal transduction, they regulate the leptin receptor/LEPR in the leptin-mediated signaling pathway. They also play an important role in the establishment of the skin barrier regulating keratinocyte differentiation and the proper assembly of the cornified envelope. The biosynthesis of GSLs is also required for the proper intestinal endocytic uptake of nutritional lipids. Catalyzes the synthesis of xylosylceramide/XylCer (such as beta-D-xylosyl-(1&lt;-&gt;1')-N-acylsphing-4-enine) using UDP-Xyl as xylose donor. In Homo sapiens (Human), this protein is Ceramide glucosyltransferase.